Consider the following 333-residue polypeptide: Protein farnesyltransferase/geranylgeranyltransferase type-1 subunit alpha (333 aa).

PFTA repeat units lie at residues 61–95, 96–130, 132–166, 167–200, and 207–241; these read LSSR…SLKV, DLHV…KLGP, ARNS…NLGG, WEDE…RSPV, and MRES…DEST.

The protein belongs to the protein prenyltransferase subunit alpha family. As to quaternary structure, heterodimer of FTA and FTB (farnesyltransferase). Heterodimer of an alpha and a beta subunit. The cofactor is Mg(2+).

The catalysed reaction is L-cysteinyl-[protein] + (2E,6E)-farnesyl diphosphate = S-(2E,6E)-farnesyl-L-cysteinyl-[protein] + diphosphate. The enzyme catalyses geranylgeranyl diphosphate + L-cysteinyl-[protein] = S-geranylgeranyl-L-cysteinyl-[protein] + diphosphate. Essential subunit of both the farnesyltransferase and the geranylgeranyltransferase complex. Contributes to the transfer of a farnesyl or geranylgeranyl moiety from farnesyl or geranylgeranyl diphosphate to a cysteine at the fourth position from the C-terminus of several proteins having the C-terminal sequence Cys-aliphatic-aliphatic-X. This is Protein farnesyltransferase/geranylgeranyltransferase type-1 subunit alpha (FTA) from Pisum sativum (Garden pea).